The following is a 75-amino-acid chain: uncharacterized protein (75 aa).

One can recognise a LysM domain in the interval 29–72 (EVYHVESGDTLWTIAKSFEIPVQQLMNLNKLSSDRIYPGQIIKI).

This is an uncharacterized protein from Bacillus subtilis (strain 168).